The chain runs to 469 residues: Solute carrier family 52, riboflavin transporter, member 3 (469 aa).

Over 1–6 (MALLTH) the chain is Cytoplasmic. Residues 7-27 (LLVCTFGMGSWVAINGLWVEL) form a helical membrane-spanning segment. Topologically, residues 28–43 (PLLVTELPEGWYLPSY) are extracellular. A helical transmembrane segment spans residues 44 to 64 (LTMVIQLANIGPLLVTLLHHF). Topologically, residues 65 to 71 (QPSCLSE) are cytoplasmic. The helical transmembrane segment at 72 to 92 (VPIIFTVLAVGTVACALFAFL) threads the bilayer. Topologically, residues 93 to 105 (WNVTSWVLDGRHS) are extracellular. N-linked (GlcNAc...) asparagine glycosylation is present at N94. Residues 106-126 (IAFMVLTFFLALVDCTSSVTF) form a helical membrane-spanning segment. At 127 to 137 (LPFMSRLPACY) the chain is on the cytoplasmic side. A helical membrane pass occupies residues 138 to 158 (LTTFFVGEGLSSLLPALVALA). Over 159 to 220 (QGSGLTTCVN…SRYLPANFSP (62 aa)) the chain is Extracellular. N-linked (GlcNAc...) asparagine glycosylation is present at N168. The helical transmembrane segment at 221–241 (LVFFLLLSFMMACCLAAFFLL) threads the bilayer. Topologically, residues 242-297 (QRQPRPRESSIEDLLTSQVTLHSIRPREGDDLGPPDPGPSSKAQGLPEEKTASDHP) are cytoplasmic. Position 251 is a phosphoserine (S251). The tract at residues 266 to 290 (RPREGDDLGPPDPGPSSKAQGLPEE) is disordered. A helical transmembrane segment spans residues 298–318 (AHLAFIYVLVAFVNALTNGVL). The Extracellular segment spans residues 319 to 335 (PSVQTYSCLSYGPVAYH). A helical membrane pass occupies residues 336–356 (LSATLSSMANPLACFLSMFLP). At 357–361 (HRSLP) the chain is on the cytoplasmic side. Residues 362 to 382 (FLGVLTVLGTGFGAYNMAMAV) form a helical membrane-spanning segment. Over 383-396 (MSPCPLMQGHWAGE) the chain is Extracellular. Residues 397 to 417 (ILIVASWVLFIGCLSYVKVML) traverse the membrane as a helical segment. Residues 418–427 (GVILRDRSRS) are Cytoplasmic-facing. The helical transmembrane segment at 428–448 (ALVWCGAAVQLGSLLGALLMF) threads the bilayer. Topologically, residues 449–469 (PLVNVLRLFSSADFCSLQCSA) are extracellular.

Belongs to the riboflavin transporter family.

Its subcellular location is the cell membrane. It catalyses the reaction riboflavin(in) = riboflavin(out). Plasma membrane transporter mediating the uptake by cells of the water soluble vitamin B2/riboflavin that plays a key role in biochemical oxidation-reduction reactions of the carbohydrate, lipid, and amino acid metabolism. This chain is Solute carrier family 52, riboflavin transporter, member 3 (SLC52A3), found in Ailuropoda melanoleuca (Giant panda).